We begin with the raw amino-acid sequence, 959 residues long: Protein moonraker (959 aa).

Positions 124–156 are disordered; sequence LPHSSHKGMHTKVERKDSKSQDVCHCSHQPSRV. A compositionally biased stretch (basic and acidic residues) spans 134–145; that stretch reads TKVERKDSKSQD. Ser-279 carries the phosphoserine modification. Basic and acidic residues predominate over residues 456 to 470; sequence EEAPRIEDNGTDFKD. Disordered stretches follow at residues 456 to 560 and 572 to 610; these read EEAP…ASPK and RDAA…AESS. Residues 515-533 show a composition bias toward polar residues; that stretch reads PNQPYSKSRLQQTTVSSRL. The segment covering 547–558 has biased composition (pro residues); sequence WIPPNPTSPPAS. Positions 582-674 form a coiled coil; the sequence is QEDIHKESQL…TQLADKVEEA (93 aa). A compositionally biased stretch (basic and acidic residues) spans 583–599; that stretch reads EDIHKESQLRGDAEQEA. At Ser-691 the chain carries Phosphoserine. 2 disordered regions span residues 692–721 and 848–883; these read SVEA…SDVP and LDES…PLSV. The segment covering 707-717 has biased composition (low complexity); it reads AAAAAQPAEQA. A compositionally biased stretch (basic and acidic residues) spans 857-874; sequence GSEKREAPLPLSREDLHQ. The necessary and sufficient for CEP20-binding stretch occupies residues 877–959; that stretch reads GQTPLSVPPR…FTSEFLEAAA (83 aa).

In terms of assembly, interacts with CEP63 and WDR62. Forms a complex with OFD1 and CEP20/FOR20. Interacts with PCM1.

The protein localises to the cytoplasm. It localises to the cytoskeleton. Its subcellular location is the microtubule organizing center. The protein resides in the centrosome. It is found in the centriolar satellite. In terms of biological role, involved in centriole duplication. Positively regulates CEP63 centrosomal localization. Required for WDR62 centrosomal localization and promotes the centrosomal localization of CDK2. May play a role in cilium assembly. This Mus musculus (Mouse) protein is Protein moonraker (Kiaa0753).